Reading from the N-terminus, the 177-residue chain is MKYSRIVVMGPPGCGKGTQSSLISEKYEIPHVSSGDIIREEMKKSSKEATVIREMVNSGRLAPDEIVNELVLKKIRSMSKYILDGYPRRIEQAGMLGDDVDLVIFIDVDEDTCISRICGRNEGRDDDDEEVGRKRCMVYNKETAPVLEFYKRHGKLLTINGCASPGTVFEEIRRSIE.

An ATP-binding site is contributed by 13–18 (GCGKGT). The interval 33–62 (SSGDIIREEMKKSSKEATVIREMVNSGRLA) is NMP. Residues S34, R39, 60 to 62 (RLA), 85 to 88 (GYPR), and Q92 contribute to the AMP site. Positions 119 to 127 (GRNEGRDDD) are LID. R120 serves as a coordination point for ATP. Residues R124 and R135 each coordinate AMP.

Belongs to the adenylate kinase family. As to quaternary structure, monomer.

Its subcellular location is the cytoplasm. The enzyme catalyses AMP + ATP = 2 ADP. In terms of biological role, catalyzes the reversible transfer of the terminal phosphate group between ATP and AMP. Plays an important role in cellular energy homeostasis and in adenine nucleotide metabolism. The sequence is that of Adenylate kinase from Encephalitozoon cuniculi (strain GB-M1) (Microsporidian parasite).